We begin with the raw amino-acid sequence, 532 residues long: FRIGIDA-like protein 4a (532 aa).

A disordered region spans residues 406–432 (KTEKRKPAAVPANKRTRASYNGPMPPA).

Belongs to the Frigida family. Expressed in leaves, shoot apex, flowers and during seed development.

In Arabidopsis thaliana (Mouse-ear cress), this protein is FRIGIDA-like protein 4a (FRL4A).